A 512-amino-acid polypeptide reads, in one-letter code: Phospho-2-dehydro-3-deoxyheptonate aldolase 2, chloroplastic (512 aa).

Residues 1–57 constitute a chloroplast transit peptide; that stretch reads MALTATATTRGGSALPNSCLQTPKFQSLQKPTFISSFPTNKKTKPRTKHISAVQSPP. Residues 37 to 57 are disordered; it reads FPTNKKTKPRTKHISAVQSPP. Cys126 is a binding site for Mn(2+). Residues Arg165, 324–325, Lys347, and Arg378 contribute to the substrate site; that span reads ER. Residues His410, Glu452, and Asp482 each coordinate Mn(2+).

It belongs to the class-II DAHP synthase family. In terms of assembly, homodimer. Requires Mn(2+) as cofactor. Mostly expressed in leaves and stems, and, to a lower extent, in roots, stigmas, anthers, petal tubes, petal limbs and sepals.

It is found in the plastid. The protein localises to the chloroplast. It carries out the reaction D-erythrose 4-phosphate + phosphoenolpyruvate + H2O = 7-phospho-2-dehydro-3-deoxy-D-arabino-heptonate + phosphate. It functions in the pathway metabolic intermediate biosynthesis; chorismate biosynthesis; chorismate from D-erythrose 4-phosphate and phosphoenolpyruvate: step 1/7. Functionally, involved in the production of volatile organic compounds (VOCs). Catalyzes an aldol-like condensation reaction between phosphoenolpyruvate (PEP) and D-erythrose 4-phosphate (E4P) to generate 3-deoxy-D-arabino-heptulosonate 7-phosphate (DAH7P) and inorganic phosphate. The chain is Phospho-2-dehydro-3-deoxyheptonate aldolase 2, chloroplastic from Petunia hybrida (Petunia).